The sequence spans 810 residues: Phenylalanine--tRNA ligase beta subunit (810 aa).

Residues 39 to 151 enclose the tRNA-binding domain; that stretch reads RTWAAGVVVG…AGLQAGQPVG (113 aa). The 87-residue stretch at 408–494 folds into the B5 domain; the sequence is EPEHSITLRL…RLYGYDNFGE (87 aa). The Mg(2+) site is built by aspartate 472, aspartate 478, glutamate 481, and glutamate 482. The FDX-ACB domain occupies 716–809; that stretch reads SSFPASDRDL…LVERFRVTLR (94 aa).

This sequence belongs to the phenylalanyl-tRNA synthetase beta subunit family. Type 1 subfamily. As to quaternary structure, tetramer of two alpha and two beta subunits. It depends on Mg(2+) as a cofactor.

It is found in the cytoplasm. The catalysed reaction is tRNA(Phe) + L-phenylalanine + ATP = L-phenylalanyl-tRNA(Phe) + AMP + diphosphate + H(+). The polypeptide is Phenylalanine--tRNA ligase beta subunit (pheT) (Synechococcus elongatus (strain ATCC 33912 / PCC 7942 / FACHB-805) (Anacystis nidulans R2)).